We begin with the raw amino-acid sequence, 506 residues long: Lysine--tRNA ligase (506 aa).

Mg(2+)-binding residues include Glu416 and Glu423.

It belongs to the class-II aminoacyl-tRNA synthetase family. As to quaternary structure, homodimer. Requires Mg(2+) as cofactor.

The protein resides in the cytoplasm. It carries out the reaction tRNA(Lys) + L-lysine + ATP = L-lysyl-tRNA(Lys) + AMP + diphosphate. This is Lysine--tRNA ligase from Xylella fastidiosa (strain M12).